Reading from the N-terminus, the 356-residue chain is Heat-inducible transcription repressor HrcA (356 aa).

The protein belongs to the HrcA family.

Negative regulator of class I heat shock genes (grpE-dnaK-dnaJ and groELS operons). Prevents heat-shock induction of these operons. In Chlorobaculum tepidum (strain ATCC 49652 / DSM 12025 / NBRC 103806 / TLS) (Chlorobium tepidum), this protein is Heat-inducible transcription repressor HrcA.